A 182-amino-acid chain; its full sequence is MPPTKLPESGNPLVFFDITIGGEPLGRITFELFKDVVPKTAENFRQFCTGESKTPVGRPQGYKGSKFHRIIPNFMCQGGDFLNGDGTGSTCIWGFKSFEDENFTLKHDQPGLLSMANAGPNTNGSQFFITTVPTPFLDNKHVVFGKVFEGMDVVKKMEATKTGYRGKDMPNLDVVISQCGEM.

The region spanning 15 to 181 (FFDITIGGEP…LDVVISQCGE (167 aa)) is the PPIase cyclophilin-type domain.

It belongs to the cyclophilin-type PPIase family. PPIase H subfamily.

The protein localises to the nucleus. It carries out the reaction [protein]-peptidylproline (omega=180) = [protein]-peptidylproline (omega=0). In terms of biological role, PPIases accelerate the folding of proteins. It catalyzes the cis-trans isomerization of proline imidic peptide bonds in oligopeptides. The polypeptide is Peptidyl-prolyl cis-trans isomerase H (CYP3) (Gibberella zeae (strain ATCC MYA-4620 / CBS 123657 / FGSC 9075 / NRRL 31084 / PH-1) (Wheat head blight fungus)).